A 526-amino-acid polypeptide reads, in one-letter code: Histidine ammonia-lyase (526 aa).

Positions 143–145 (ASG) form a cross-link, 5-imidazolinone (Ala-Gly). A 2,3-didehydroalanine (Ser) modification is found at Ser144.

Belongs to the PAL/histidase family. Post-translationally, contains an active site 4-methylidene-imidazol-5-one (MIO), which is formed autocatalytically by cyclization and dehydration of residues Ala-Ser-Gly.

It localises to the cytoplasm. It catalyses the reaction L-histidine = trans-urocanate + NH4(+). It participates in amino-acid degradation; L-histidine degradation into L-glutamate; N-formimidoyl-L-glutamate from L-histidine: step 1/3. The sequence is that of Histidine ammonia-lyase from Aromatoleum aromaticum (strain DSM 19018 / LMG 30748 / EbN1) (Azoarcus sp. (strain EbN1)).